Here is a 1062-residue protein sequence, read N- to C-terminus: Protein P1-P2 (1062 aa).

The N-terminal stretch at 1 to 20 (MNRFTAYAALFFMFSLCSTA) is a signal peptide. 3 helical membrane passes run 121–141 (AASVTLWAIINIWFGLYWTLA), 144–164 (ITLFLWTFSIEALCLILLGCI), and 172–192 (ALSLSEHLPVFLFMSPLKIIW). Positions 207 to 399 (VEGYKGFSVP…GITSPNYVFE (193 aa)) constitute a Peptidase S39 domain. Catalysis depends on for protease activity residues His-255, Asp-286, and Ser-354. The tract at residues 455–560 (ATNAPAEKTA…QTKEARKAWR (106 aa)) is disordered. A compositionally biased stretch (polar residues) spans 463-484 (TAQTNSAEKTAPSTSAEKTALT). A compositionally biased stretch (basic residues) spans 497–511 (QNKRQLRHPRRRYKR). The segment covering 551–560 (QTKEARKAWR) has biased composition (basic and acidic residues). The RdRp catalytic domain occupies 859–974 (EYTRPTDCSG…APNSDLEEYK (116 aa)).

In terms of processing, specific enzymatic cleavages in vivo yield mature proteins. The protease probably cleaves itself and releases the RdRp (Potential). Cleavages have been shown in the P1 protein, but since the N-terminus containing the serine protease is shared between P1 and P1-P2, cleavages should also occur within the P1-P2 protein.

It is found in the membrane. It catalyses the reaction RNA(n) + a ribonucleoside 5'-triphosphate = RNA(n+1) + diphosphate. Functionally, precursor from which the RNA-dependent RNA polymerase (RdRp) is probably released. RNA-dependent RNA polymerase plays an essential role in virus replication (Potential). The protein is Protein P1-P2 of Potato leafroll virus (strain Potato/Scotland/strain 1/1984) (PLrV).